The following is a 305-amino-acid chain: Oxidoreductase swnR (305 aa).

Belongs to the NmrA-type oxidoreductase family. Isoflavone reductase subfamily.

The enzyme catalyses L-pipecolate + O2 = L-1-piperideine-6-carboxylate + H2O2 + H(+). It functions in the pathway mycotoxin biosynthesis. Its function is as follows. Oxidoreductase; part of the gene cluster that mediates the biosynthesis of swainsonine (SW), a cytotoxic fungal alkaloid and a potential cancer therapy drug. Swainsonine production occurs via a multibranched pathway and is dispensable for fungal colonization of plants and infection of insect hosts. The first step of swainsonine biosynthesis is the production of the precursor pipecolic acid (PA) via conversion of L-lysine (Lys) to 1-piperideine-6-carboxylate (P6C) by the aminotransferase swnA, the latter being further reduced to PA by the reductase swnR. PA can be converted from lysine by both the SW biosynthetic cluster and the unclustered genes such as lysine cyclodeaminase. The PKS-NRPS hybrid synthetase swnK uptakes and condensates PA and malonyl-CoA with and without skipping of the ketoreductase (KR) domain in order to produce 3 intermediates, 1-oxoindolizidine, (1S)-1-hydroxyindolizin, and (1R)-1-hydroxyindolizine; with the transisomer (1S)-1-hydroxyindolizin being predominant. The terminal thioester reductase (TE) domain of swnK is involved in reduction of the thioester bond to release the intermediate aldehydes. The oxidoreductase swnN could contribute to the reduction of 1-oxoindolizidine to (1S)-1-hydroxyindolizin and (1R)-1-hydroxyindolizine, contributing to the major route of SW production. The dioxygenase swnH2 would be responsible for the oxidization of (1R)-1-hydroxyindolizine into (1R,2S)-1,2-dihydroxyindolizine and of (1S)-1-hydroxyindolizin to yield both (1R,2S)-1,2-dihydroxyindolizine and (1S,2S)-1,2-dihydroxyindolizine. The dioxygenase swnH1 then performs the conversion of the 1,2-dihydroxyindolizine epimers to SW. The sequence is that of Oxidoreductase swnR from Metarhizium robertsii (strain ARSEF 23 / ATCC MYA-3075) (Metarhizium anisopliae (strain ARSEF 23)).